The following is a 63-amino-acid chain: MFHLVDFQVTIAEILIIIMKTFRVAIWNLDILISSIVRQLFKPLTKKNYSELDDEEPMELDYP.

Belongs to the coronaviruses accessory protein 6 family.

Its subcellular location is the host endoplasmic reticulum membrane. It is found in the host Golgi apparatus membrane. In terms of biological role, could be a determinant of virus virulence. Seems to stimulate cellular DNA synthesis in vitro. The chain is ORF6 protein from Bat coronavirus HKU3 (BtCoV).